The following is a 286-amino-acid chain: Lipoyl synthase (286 aa).

7 residues coordinate [4Fe-4S] cluster: Cys29, Cys34, Cys40, Cys55, Cys59, Cys62, and Ser265. The 214-residue stretch at 41-254 (WGSGTATFMI…EKIAYSLGFS (214 aa)) folds into the Radical SAM core domain.

It belongs to the radical SAM superfamily. Lipoyl synthase family. The cofactor is [4Fe-4S] cluster.

It localises to the cytoplasm. It carries out the reaction [[Fe-S] cluster scaffold protein carrying a second [4Fe-4S](2+) cluster] + N(6)-octanoyl-L-lysyl-[protein] + 2 oxidized [2Fe-2S]-[ferredoxin] + 2 S-adenosyl-L-methionine + 4 H(+) = [[Fe-S] cluster scaffold protein] + N(6)-[(R)-dihydrolipoyl]-L-lysyl-[protein] + 4 Fe(3+) + 2 hydrogen sulfide + 2 5'-deoxyadenosine + 2 L-methionine + 2 reduced [2Fe-2S]-[ferredoxin]. It functions in the pathway protein modification; protein lipoylation via endogenous pathway; protein N(6)-(lipoyl)lysine from octanoyl-[acyl-carrier-protein]: step 2/2. Functionally, catalyzes the radical-mediated insertion of two sulfur atoms into the C-6 and C-8 positions of the octanoyl moiety bound to the lipoyl domains of lipoate-dependent enzymes, thereby converting the octanoylated domains into lipoylated derivatives. The chain is Lipoyl synthase from Sulfolobus acidocaldarius (strain ATCC 33909 / DSM 639 / JCM 8929 / NBRC 15157 / NCIMB 11770).